A 296-amino-acid chain; its full sequence is uncharacterized protein (296 aa).

The HTH lysR-type domain maps to 1-60 (MDPKISYFQTFIVASKTKSFSKAAKRLGITQGTVSNHISALEKYFDAQLFLRTPEGVDLT). The H-T-H motif DNA-binding region spans 20–39 (FSKAAKRLGITQGTVSNHIS).

This sequence belongs to the LysR transcriptional regulatory family.

This is an uncharacterized protein from Methanocaldococcus jannaschii (strain ATCC 43067 / DSM 2661 / JAL-1 / JCM 10045 / NBRC 100440) (Methanococcus jannaschii).